Reading from the N-terminus, the 620-residue chain is MYGFVNHALELLVIRNYGPEVWEDIKKEAQLDEEGQFLVRIIYDDSKTYDLVAAASKVLNLNAGEILQMFGKMFFVFCQESGYDTILRVLGSNVREFLQNLDALHDHLATIYPGMRAPSFRCTDAEKGKGLILHYYSEREGLQDIVIGIIKTVAQQIHGTEIDMKVIQQRNEECDHTQFLIEEKESKEEDFYEDLDRFEENGTQESRISPYTFCKAFPFHIIFDRNLVVTQCGNAIYRVLPQLQPGNCSLLSVFSLVRPHIDISFHGILSHINTVFVLRSKEGLLDVEKLECEDELTGAEISCLRLKGQMIYLPEADSILFLCSPSVMNLDDLTRRGLYLSDIPLHDATRDLVLLGEQFREEYKLTQELEILTDRLQLTLRALEDEKKKTDTLLYSVLPPSVANELRHKRPVPAKRYDNVTILFSGIVGFNAFCSKHASGEGAMKIVNLLNDLYTRFDTLTDSRKNPFVYKVETVGDKYMTVSGLPEPCIHHARSICHLALDMMEIAGQVQVDGESVQITIGIHTGEVVTGVIGQRMPRYCLFGNTVNLTSRTETTGEKGKINVSEYTYRCLMSPENSDPLFHLEHRGPVSMKGKKEPMQVWFLSRKNTGTEETNEEDEN.

His105 contacts heme. Positions 421 to 554 (TILFSGIVGF…NTVNLTSRTE (134 aa)) constitute a Guanylate cyclase domain.

Belongs to the adenylyl cyclase class-4/guanylyl cyclase family. The active enzyme is formed by a heterodimer of an alpha and a beta subunit. Heterodimer with GUCY1A1. Can also form inactive homodimers in vitro. Heme is required as a cofactor.

It is found in the cytoplasm. The catalysed reaction is GTP = 3',5'-cyclic GMP + diphosphate. Activated by nitric oxide in the presence of magnesium or manganese ions. Functionally, mediates responses to nitric oxide (NO) by catalyzing the biosynthesis of the signaling molecule cGMP. The protein is Guanylate cyclase soluble subunit beta-1 (Gucy1b1) of Mus musculus (Mouse).